The primary structure comprises 281 residues: Ribosomal protein L11 methyltransferase (281 aa).

4 residues coordinate S-adenosyl-L-methionine: threonine 133, glycine 154, aspartate 175, and asparagine 216.

The protein belongs to the methyltransferase superfamily. PrmA family.

Its subcellular location is the cytoplasm. The catalysed reaction is L-lysyl-[protein] + 3 S-adenosyl-L-methionine = N(6),N(6),N(6)-trimethyl-L-lysyl-[protein] + 3 S-adenosyl-L-homocysteine + 3 H(+). Its function is as follows. Methylates ribosomal protein L11. The sequence is that of Ribosomal protein L11 methyltransferase from Campylobacter jejuni subsp. jejuni serotype O:2 (strain ATCC 700819 / NCTC 11168).